The primary structure comprises 243 residues: Sec-independent protein translocase protein TATB, chloroplastic (243 aa).

A chloroplast-targeting transit peptide spans 1 to 67 (MTPTANLLLP…SRTRRRNVIC (67 aa)). Residues 68-69 (AS) are Lumenal-facing. The chain crosses the membrane as a helical span at residues 70 to 90 (LFGVGAPEALVIGVVALLVFG). The Stromal portion of the chain corresponds to 91–243 (PKGLAEVARN…NKSQKAEGER (153 aa)). Disordered regions lie at residues 129–165 (EIGI…PAPY) and 178–243 (IAAS…EGER). 2 stretches are compositionally biased toward polar residues: residues 135–152 (VSQS…NQQP) and 187–204 (NPQQ…PTTP).

Belongs to the TatB family. As to quaternary structure, in thylakoid membranes, TATC and TATB form a large receptor complex, containing about eight TATC-TATB pairs, which binds the precursor protein. Twin arginine signal peptide promotes pH-triggered docking of TATA oligomers to TATC-TATB receptor complex, inducing a conformational switch of TATA that results in activation of the translocase. TATA dissociates from TATC-TATB upon completion of translocation.

Its subcellular location is the plastid. The protein resides in the chloroplast thylakoid membrane. Its function is as follows. Part of the twin-arginine translocation (Tat) system that transports large folded proteins containing a characteristic twin-arginine motif in their signal peptide across the thylakoid membrane. Involved in delta pH-dependent protein transport required for chloroplast development, especially thylakoid membrane formation. TATC and TATB mediate precursor recognition, whereas TATA facilitates translocation. The protein is Sec-independent protein translocase protein TATB, chloroplastic of Zea mays (Maize).